The following is a 333-amino-acid chain: Nucleoid-associated protein APJL_0454 (333 aa).

Belongs to the YejK family.

Its subcellular location is the cytoplasm. The protein localises to the nucleoid. The chain is Nucleoid-associated protein APJL_0454 from Actinobacillus pleuropneumoniae serotype 3 (strain JL03).